A 238-amino-acid polypeptide reads, in one-letter code: CFA/I fimbrial subunit A (238 aa).

The first 19 residues, 1-19, serve as a signal peptide directing secretion; the sequence is MHKLFYLLSLLMAPFVANA.

The protein resides in the fimbrium. Its function is as follows. Might function as a shuttle protein in the transport of fimbria through the periplasmic space or might function as an adhesin. The protein is CFA/I fimbrial subunit A (cfaA) of Escherichia coli.